The chain runs to 157 residues: Phosphopantetheine adenylyltransferase (157 aa).

A substrate-binding site is contributed by T10. ATP contacts are provided by residues 10-11 and H18; that span reads TF. Positions 42, 74, and 88 each coordinate substrate. Residues 89-91, E99, and 124-130 contribute to the ATP site; these read GLR and NAFISSS.

This sequence belongs to the bacterial CoaD family. In terms of assembly, homohexamer. Requires Mg(2+) as cofactor.

The protein resides in the cytoplasm. The enzyme catalyses (R)-4'-phosphopantetheine + ATP + H(+) = 3'-dephospho-CoA + diphosphate. The protein operates within cofactor biosynthesis; coenzyme A biosynthesis; CoA from (R)-pantothenate: step 4/5. Its activity is regulated as follows. Tightly binds to CoA, which is presumably a feedback inhibitor. Potently inhibited by D-amethopterin, which simultaneously occupies the 4'-phosphopantetheine- and ATP-binding sites; following treatment with D-amethopterin, H.pylori exhibits morphological characteristics associated with cell death, showing that D-amethopterin displays antimicrobial activity. Functionally, reversibly transfers an adenylyl group from ATP to 4'-phosphopantetheine, yielding dephospho-CoA (dPCoA) and pyrophosphate. The protein is Phosphopantetheine adenylyltransferase of Helicobacter pylori (strain ATCC 700392 / 26695) (Campylobacter pylori).